Reading from the N-terminus, the 157-residue chain is Transcription elongation factor GreA (157 aa).

It belongs to the GreA/GreB family.

Necessary for efficient RNA polymerase transcription elongation past template-encoded arresting sites. The arresting sites in DNA have the property of trapping a certain fraction of elongating RNA polymerases that pass through, resulting in locked ternary complexes. Cleavage of the nascent transcript by cleavage factors such as GreA or GreB allows the resumption of elongation from the new 3'terminus. GreA releases sequences of 2 to 3 nucleotides. The sequence is that of Transcription elongation factor GreA from Bartonella tribocorum (strain CIP 105476 / IBS 506).